Reading from the N-terminus, the 177-residue chain is Large ribosomal subunit protein uL6 (177 aa).

It belongs to the universal ribosomal protein uL6 family. Part of the 50S ribosomal subunit.

Functionally, this protein binds to the 23S rRNA, and is important in its secondary structure. It is located near the subunit interface in the base of the L7/L12 stalk, and near the tRNA binding site of the peptidyltransferase center. The sequence is that of Large ribosomal subunit protein uL6 from Mannheimia succiniciproducens (strain KCTC 0769BP / MBEL55E).